A 703-amino-acid polypeptide reads, in one-letter code: Fanconi-associated nuclease 1 homolog (703 aa).

Glu529, Asp651, Glu666, and Val667 together coordinate Mn(2+). The region spanning 597 to 698 (YIREHQRKTF…EVDVEVCHVS (102 aa)) is the VRR-NUC domain.

This sequence belongs to the FAN1 family. It depends on Mn(2+) as a cofactor. The cofactor is Mg(2+).

It is found in the nucleus. The enzyme catalyses Hydrolytically removes 5'-nucleotides successively from the 3'-hydroxy termini of 3'-hydroxy-terminated oligonucleotides.. Nuclease required for the repair of DNA interstrand cross-links (ICL). Acts as a 5'-3' exonuclease that anchors at a cut end of DNA and cleaves DNA successively at every third nucleotide, allowing to excise an ICL from one strand through flanking incisions. The chain is Fanconi-associated nuclease 1 homolog from Schizosaccharomyces pombe (strain 972 / ATCC 24843) (Fission yeast).